Here is a 251-residue protein sequence, read N- to C-terminus: Ubiquinone/menaquinone biosynthesis C-methyltransferase UbiE (251 aa).

S-adenosyl-L-methionine is bound by residues Thr74, Asp95, and 123-124 (NA).

This sequence belongs to the class I-like SAM-binding methyltransferase superfamily. MenG/UbiE family.

The catalysed reaction is a 2-demethylmenaquinol + S-adenosyl-L-methionine = a menaquinol + S-adenosyl-L-homocysteine + H(+). It catalyses the reaction a 2-methoxy-6-(all-trans-polyprenyl)benzene-1,4-diol + S-adenosyl-L-methionine = a 5-methoxy-2-methyl-3-(all-trans-polyprenyl)benzene-1,4-diol + S-adenosyl-L-homocysteine + H(+). It participates in quinol/quinone metabolism; menaquinone biosynthesis; menaquinol from 1,4-dihydroxy-2-naphthoate: step 2/2. Its pathway is cofactor biosynthesis; ubiquinone biosynthesis. Methyltransferase required for the conversion of demethylmenaquinol (DMKH2) to menaquinol (MKH2) and the conversion of 2-polyprenyl-6-methoxy-1,4-benzoquinol (DDMQH2) to 2-polyprenyl-3-methyl-6-methoxy-1,4-benzoquinol (DMQH2). This chain is Ubiquinone/menaquinone biosynthesis C-methyltransferase UbiE, found in Shewanella sp. (strain ANA-3).